The sequence spans 420 residues: Serine hydroxymethyltransferase (420 aa).

(6S)-5,6,7,8-tetrahydrofolate is bound by residues Leu-121 and 125–127 (GHL). Residue Lys-230 is modified to N6-(pyridoxal phosphate)lysine. (6S)-5,6,7,8-tetrahydrofolate contacts are provided by residues Glu-246 and 354 to 356 (SPF).

It belongs to the SHMT family. Homodimer. Requires pyridoxal 5'-phosphate as cofactor.

The protein resides in the cytoplasm. It carries out the reaction (6R)-5,10-methylene-5,6,7,8-tetrahydrofolate + glycine + H2O = (6S)-5,6,7,8-tetrahydrofolate + L-serine. Its pathway is one-carbon metabolism; tetrahydrofolate interconversion. It participates in amino-acid biosynthesis; glycine biosynthesis; glycine from L-serine: step 1/1. Functionally, catalyzes the reversible interconversion of serine and glycine with tetrahydrofolate (THF) serving as the one-carbon carrier. This reaction serves as the major source of one-carbon groups required for the biosynthesis of purines, thymidylate, methionine, and other important biomolecules. Also exhibits THF-independent aldolase activity toward beta-hydroxyamino acids, producing glycine and aldehydes, via a retro-aldol mechanism. The polypeptide is Serine hydroxymethyltransferase (Rickettsia canadensis (strain McKiel)).